The primary structure comprises 275 residues: Proteasome subunit beta (275 aa).

The propeptide at 1-52 is removed in mature form; by autocatalysis; sequence MQDTTANQVAANATSSFTEHLQRNRPGLLPYNQPFPAALTGAGSQPLQVPHA. The active-site Nucleophile is T53.

Belongs to the peptidase T1B family. In terms of assembly, the 20S proteasome core is composed of 14 alpha and 14 beta subunits that assemble into four stacked heptameric rings, resulting in a barrel-shaped structure. The two inner rings, each composed of seven catalytic beta subunits, are sandwiched by two outer rings, each composed of seven alpha subunits. The catalytic chamber with the active sites is on the inside of the barrel. Has a gated structure, the ends of the cylinder being occluded by the N-termini of the alpha-subunits. Is capped by the proteasome-associated ATPase, ARC.

The protein resides in the cytoplasm. The enzyme catalyses Cleavage of peptide bonds with very broad specificity.. The protein operates within protein degradation; proteasomal Pup-dependent pathway. The formation of the proteasomal ATPase ARC-20S proteasome complex, likely via the docking of the C-termini of ARC into the intersubunit pockets in the alpha-rings, may trigger opening of the gate for substrate entry. Interconversion between the open-gate and close-gate conformations leads to a dynamic regulation of the 20S proteasome proteolysis activity. Functionally, component of the proteasome core, a large protease complex with broad specificity involved in protein degradation. This Arthrobacter sp. (strain FB24) protein is Proteasome subunit beta.